Here is a 1893-residue protein sequence, read N- to C-terminus: Plexin-A4 (1893 aa).

Residues 1 to 23 (MKAMPWNWTCLLSHLLVVGMGSS) form the signal peptide. The Sema domain maps to 24-506 (TLLPRQPPQL…SERQLTRVPV (483 aa)). The Extracellular portion of the chain corresponds to 24–1236 (TLLPRQPPQL…IAPDSPLSLP (1213 aa)). 10 disulfides stabilise this stretch: Cys-94/Cys-103, Cys-129/Cys-137, Cys-283/Cys-404, Cys-299/Cys-355, Cys-373/Cys-392, Cys-509/Cys-526, Cys-515/Cys-557, Cys-518/Cys-535, Cys-529/Cys-541, and Cys-592/Cys-611. Residues 508 to 558 (SCGQYRSCGECLGSGDPHCGWCVLHNTCTRKERCERSREPRRFASEMKQCV) enclose the PSI 1 domain. N-linked (GlcNAc...) asparagine glycosylation occurs at Asn-654. PSI domains are found at residues 654 to 701 (NCSV…EDCP) and 802 to 855 (KCGA…SKCT). IPT/TIG domains follow at residues 857-951 (PRIT…YYFM), 953-1036 (LTLA…FQYV), 1039-1138 (PTIV…FTYY), and 1141-1229 (PVFE…YIAP). Asn-1006, Asn-1131, and Asn-1179 each carry an N-linked (GlcNAc...) asparagine glycan. A helical transmembrane segment spans residues 1237–1257 (AIVSIAVAGGLLIIFIVAVLI). Over 1258–1893 (AYKRKSRESD…QVITLMSLDS (636 aa)) the chain is Cytoplasmic. Lys-1349 carries the post-translational modification N6-acetyllysine.

This sequence belongs to the plexin family. As to quaternary structure, interacts with NRP1 and NRP2. In terms of tissue distribution, expressed in the developing nervous system. Widely expressed in both the central and peripheral nervous systems. Expressed in the peripheral ganglia, somatosensory, olfactory, visual, auditory and equilibrium systems.

It is found in the cell membrane. Its function is as follows. Coreceptor for SEMA3A. Necessary for signaling by class 3 semaphorins and subsequent remodeling of the cytoskeleton. Plays a role in axon guidance in the developing nervous system. Class 3 semaphorins bind to a complex composed of a neuropilin and a plexin. The plexin modulates the affinity of the complex for specific semaphorins, and its cytoplasmic domain is required for the activation of down-stream signaling events in the cytoplasm. The polypeptide is Plexin-A4 (Plxna4) (Mus musculus (Mouse)).